The chain runs to 453 residues: Bifunctional protein GlmU (453 aa).

The segment at 1-226 (MTLDVVILAA…ALEVEGVNNR (226 aa)) is pyrophosphorylase. Residues 8–11 (LAAG), lysine 22, glutamine 73, 78–79 (GT), 99–101 (YGD), glycine 136, glutamate 151, asparagine 166, and asparagine 224 each bind UDP-N-acetyl-alpha-D-glucosamine. Aspartate 101 contributes to the Mg(2+) binding site. Asparagine 224 is a Mg(2+) binding site. The tract at residues 227–247 (SQMAALERAYQRDRAERLLTE) is linker. Residues 248–453 (GVALADPARF…AGWKRPRKSS (206 aa)) are N-acetyltransferase. UDP-N-acetyl-alpha-D-glucosamine contacts are provided by arginine 330 and lysine 348. The active-site Proton acceptor is the histidine 360. Residues tyrosine 363 and asparagine 374 each coordinate UDP-N-acetyl-alpha-D-glucosamine. Acetyl-CoA-binding positions include alanine 377, 383–384 (NY), serine 402, alanine 420, and arginine 437.

It in the N-terminal section; belongs to the N-acetylglucosamine-1-phosphate uridyltransferase family. This sequence in the C-terminal section; belongs to the transferase hexapeptide repeat family. Homotrimer. Mg(2+) serves as cofactor.

It is found in the cytoplasm. It carries out the reaction alpha-D-glucosamine 1-phosphate + acetyl-CoA = N-acetyl-alpha-D-glucosamine 1-phosphate + CoA + H(+). The enzyme catalyses N-acetyl-alpha-D-glucosamine 1-phosphate + UTP + H(+) = UDP-N-acetyl-alpha-D-glucosamine + diphosphate. It functions in the pathway nucleotide-sugar biosynthesis; UDP-N-acetyl-alpha-D-glucosamine biosynthesis; N-acetyl-alpha-D-glucosamine 1-phosphate from alpha-D-glucosamine 6-phosphate (route II): step 2/2. Its pathway is nucleotide-sugar biosynthesis; UDP-N-acetyl-alpha-D-glucosamine biosynthesis; UDP-N-acetyl-alpha-D-glucosamine from N-acetyl-alpha-D-glucosamine 1-phosphate: step 1/1. It participates in bacterial outer membrane biogenesis; LPS lipid A biosynthesis. In terms of biological role, catalyzes the last two sequential reactions in the de novo biosynthetic pathway for UDP-N-acetylglucosamine (UDP-GlcNAc). The C-terminal domain catalyzes the transfer of acetyl group from acetyl coenzyme A to glucosamine-1-phosphate (GlcN-1-P) to produce N-acetylglucosamine-1-phosphate (GlcNAc-1-P), which is converted into UDP-GlcNAc by the transfer of uridine 5-monophosphate (from uridine 5-triphosphate), a reaction catalyzed by the N-terminal domain. The polypeptide is Bifunctional protein GlmU (Chromohalobacter salexigens (strain ATCC BAA-138 / DSM 3043 / CIP 106854 / NCIMB 13768 / 1H11)).